The sequence spans 239 residues: Phosphoribosylaminoimidazole-succinocarboxamide synthase (239 aa).

This sequence belongs to the SAICAR synthetase family.

The catalysed reaction is 5-amino-1-(5-phospho-D-ribosyl)imidazole-4-carboxylate + L-aspartate + ATP = (2S)-2-[5-amino-1-(5-phospho-beta-D-ribosyl)imidazole-4-carboxamido]succinate + ADP + phosphate + 2 H(+). Its pathway is purine metabolism; IMP biosynthesis via de novo pathway; 5-amino-1-(5-phospho-D-ribosyl)imidazole-4-carboxamide from 5-amino-1-(5-phospho-D-ribosyl)imidazole-4-carboxylate: step 1/2. The polypeptide is Phosphoribosylaminoimidazole-succinocarboxamide synthase (Shouchella clausii (strain KSM-K16) (Alkalihalobacillus clausii)).